Consider the following 221-residue polypeptide: Immunoregulatory peptides (221 aa).

An N-terminal signal peptide occupies residues 1–19 (MNYLCLVVTLVAVAGAISG). A propeptide spanning residues 20-45 (EKFSDDNTGYQSTPSLRIRTTPGRRR) is cleaved from the precursor. The segment at 21–155 (KFSDDNTGYQ…PRTIGPPYTR (135 aa)) is disordered. Polar residues predominate over residues 25 to 34 (DNTGYQSTPS). Residues 48 to 69 (PRTIGPPYTRRTLRTTTDYSTT) show a composition bias toward low complexity. Composition is skewed to polar residues over residues 70-85 (VENG…STEK) and 123-133 (NGTTPAANSTE). Positions 191–221 (EISWTFGPLYTWRTTKGYGTTLETTNATSTS) are excised as a propeptide.

In terms of tissue distribution, salivary glands.

The protein resides in the secreted. Functionally, suppress host inflammatory response. Exerts significant anti-inflammatory functions, either by directly inhibiting host secretion of inflammatory factors such as tumor necrosis factor-alpha (TNF), monocyte chemotactic protein-1 (CCL2), and interferon-gamma (IFNG) or by indirectly increasing the secretion of immunosuppressant cytokine of interleukin-10 (IL10). Also potently scavenges free radical in vitro in a rapid manner. All tested concentrations of this peptide have little effect on the cell viability. In vivo, inhibits hind paw adjuvant-induced inflammation in mouse in a dose-dependent manner. Suppress host inflammatory response. Exerts significant anti-inflammatory functions, either by directly inhibiting host secretion of inflammatory factors such as tumor necrosis factor-alpha (TNF), monocyte chemotactic protein-1 (CCL2), and interferon-gamma (IFNG) or by indirectly increasing the secretion of immunosuppressant cytokine of interleukin-10 (IL10). Also potently scavenges free radical in vitro in a rapid manner. Low concentrations of this peptide have little effect on the cell viability, whereas high concentrations increase the cell viability by 10-20%. In vivo, inhibits hind paw adjuvant-induced inflammation in mouse in a dose-dependent manner. In terms of biological role, not studied but probably similar to Hyalomin-B1. This is Immunoregulatory peptides from Hyalomma asiaticum asiaticum (Tick).